The sequence spans 1220 residues: Pesticidal crystal protein Cry5Ac (1220 aa).

The tract at residues 1194–1220 is disordered; sequence PLPTDDQNSEGNTAFSTNSDTSMNNNQ. Polar residues predominate over residues 1198-1220; the sequence is DDQNSEGNTAFSTNSDTSMNNNQ.

Belongs to the delta endotoxin family.

In terms of biological role, promotes colloidosmotic lysis by binding to the midgut epithelial cells of hymenopteran species. This Bacillus thuringiensis protein is Pesticidal crystal protein Cry5Ac (cry5Ac).